The chain runs to 298 residues: Glycine--tRNA ligase alpha subunit (298 aa).

This sequence belongs to the class-II aminoacyl-tRNA synthetase family. In terms of assembly, tetramer of two alpha and two beta subunits.

The protein resides in the cytoplasm. It catalyses the reaction tRNA(Gly) + glycine + ATP = glycyl-tRNA(Gly) + AMP + diphosphate. This Helicobacter pylori (strain HPAG1) protein is Glycine--tRNA ligase alpha subunit.